Here is a 414-residue protein sequence, read N- to C-terminus: Multifunctional CCA protein (414 aa).

Gly8 and Arg11 together coordinate ATP. CTP contacts are provided by Gly8 and Arg11. 2 residues coordinate Mg(2+): Asp21 and Asp23. ATP contacts are provided by Arg91, Arg137, and Arg140. CTP-binding residues include Arg91, Arg137, and Arg140. In terms of domain architecture, HD spans 226–327; that stretch reads TGVHVMMVVD…VTLFERCDAF (102 aa).

This sequence belongs to the tRNA nucleotidyltransferase/poly(A) polymerase family. Bacterial CCA-adding enzyme type 1 subfamily. As to quaternary structure, monomer. Can also form homodimers and oligomers. Mg(2+) serves as cofactor. Requires Ni(2+) as cofactor.

The enzyme catalyses a tRNA precursor + 2 CTP + ATP = a tRNA with a 3' CCA end + 3 diphosphate. The catalysed reaction is a tRNA with a 3' CCA end + 2 CTP + ATP = a tRNA with a 3' CCACCA end + 3 diphosphate. Catalyzes the addition and repair of the essential 3'-terminal CCA sequence in tRNAs without using a nucleic acid template. Adds these three nucleotides in the order of C, C, and A to the tRNA nucleotide-73, using CTP and ATP as substrates and producing inorganic pyrophosphate. tRNA 3'-terminal CCA addition is required both for tRNA processing and repair. Also involved in tRNA surveillance by mediating tandem CCA addition to generate a CCACCA at the 3' terminus of unstable tRNAs. While stable tRNAs receive only 3'-terminal CCA, unstable tRNAs are marked with CCACCA and rapidly degraded. The protein is Multifunctional CCA protein of Herminiimonas arsenicoxydans.